The chain runs to 190 residues: Elongation factor P-like protein (190 aa).

Belongs to the elongation factor P family.

This is Elongation factor P-like protein from Erwinia tasmaniensis (strain DSM 17950 / CFBP 7177 / CIP 109463 / NCPPB 4357 / Et1/99).